The primary structure comprises 389 residues: uncharacterized protein (389 aa).

An N-terminal signal peptide occupies residues 1 to 29; the sequence is MQPSFTPSGGKWLSIAVILLVIGLVVGFA.

This sequence belongs to the bacterial solute-binding protein 1 family. WtpA subfamily.

This is an uncharacterized protein from Thermoplasma volcanium (strain ATCC 51530 / DSM 4299 / JCM 9571 / NBRC 15438 / GSS1).